Consider the following 582-residue polypeptide: ATP-dependent lipid A-core flippase (582 aa).

5 helical membrane passes run 26-46 (LIAA…LIYL), 68-88 (ILVM…SYCL), 140-160 (YVLV…AVMV), 164-184 (WQLS…ISIV), and 252-272 (GLVQ…ATFP). Residues 27 to 310 (IAASVALILN…LTSVNSQFQR (284 aa)) form the ABC transmembrane type-1 domain. The ABC transporter domain occupies 342-578 (ITFDNVIFSY…GGAYKQLYSM (237 aa)). 376–383 (GRSGSGKS) lines the ATP pocket.

It belongs to the ABC transporter superfamily. Lipid exporter (TC 3.A.1.106) family. Homodimer.

The protein localises to the cell inner membrane. The enzyme catalyses ATP + H2O + lipid A-core oligosaccharideSide 1 = ADP + phosphate + lipid A-core oligosaccharideSide 2.. In terms of biological role, involved in lipopolysaccharide (LPS) biosynthesis. Translocates lipid A-core from the inner to the outer leaflet of the inner membrane. Transmembrane domains (TMD) form a pore in the inner membrane and the ATP-binding domain (NBD) is responsible for energy generation. The protein is ATP-dependent lipid A-core flippase of Haemophilus ducreyi (strain 35000HP / ATCC 700724).